Here is a 1100-residue protein sequence, read N- to C-terminus: Formin-like protein 1 (1100 aa).

The segment covering 1–13 has biased composition (low complexity); sequence MGNAAGSAEQPAG. Disordered regions lie at residues 1–31, 167–200, 446–474, and 510–635; these read MGNA…PMPA, STDN…PKSR, RFSE…TRPS, and TPSG…AKKP. Glycine 2 is lipidated: N-myristoyl glycine. The residue at position 7 (serine 7) is a Phosphoserine. Residues 14 to 28 show a composition bias toward pro residues; sequence PAAPPPKQPAPPKQP. The GBD/FH3 domain occupies 27–468; that stretch reads QPMPAAGELE…PPEPEKAPPA (442 aa). Position 184 is a phosphoserine (serine 184). Residues 517-538 are compositionally biased toward low complexity; the sequence is PTPGVPTGSPSPDLAPAAEPAP. Residues 539 to 615 show a composition bias toward pro residues; it reads GAAPPPPPPL…PPPPPPPGGP (77 aa). Serine 624 and serine 693 each carry phosphoserine. The FH2 domain maps to 632–1023; the sequence is AKKPIQTKFR…QEAGADTPGK (392 aa). The tract at residues 1008-1037 is disordered; that stretch reads KKEAAAQEAGADTPGKGEPPAPKSPPKARR. Over residues 1013–1023 the composition is skewed to low complexity; it reads AQEAGADTPGK. Phosphoserine is present on serine 1031. In terms of domain architecture, DAD spans 1059 to 1090; it reads SDRDGAIEDIITVIKTVPFTARTGKRTSRLLC.

The protein belongs to the formin homology family. Interacts with RAC1, PFN1 and PFN2. Interacts (activated by RAC1) with SRGAP2 (via SH3 domain); regulates the actin filament severing activity of FMNL1. Myristoylation mediates membrane localization and blebbing. As to expression, expressed in heart, brain, placenta, lung, liver, skeletal muscle, kidney and pancreas.

The protein localises to the cytoplasm. It is found in the cell membrane. The protein resides in the cytoplasmic vesicle. Its subcellular location is the phagosome. It localises to the cell cortex. The protein localises to the cell projection. It is found in the bleb. Functionally, may play a role in the control of cell motility and survival of macrophages. Plays a role in the regulation of cell morphology and cytoskeletal organization. Required in the cortical actin filament dynamics and cell shape. The chain is Formin-like protein 1 (FMNL1) from Homo sapiens (Human).